The chain runs to 374 residues: Eukaryotic translation initiation factor 3 subunit M (374 aa).

Residue Ser2 is modified to N-acetylserine. Phosphoserine occurs at positions 2 and 152. Positions 180–339 constitute a PCI domain; that stretch reads AASKVMVELL…RKVVVSHSTH (160 aa). The residue at position 254 (Lys254) is an N6-acetyllysine. The tract at residues 344–374 is interaction with HSV-1 and HSV-2; that stretch reads KQQWQQLYDTLNAWKQNLNKVKNSLLSLSDT. Ser367 is subject to Phosphoserine.

Component of the eukaryotic translation initiation factor 3 (eIF-3) complex, which is composed of 13 subunits: EIF3A, EIF3B, EIF3C, EIF3D, EIF3E, EIF3F, EIF3G, EIF3H, EIF3I, EIF3J, EIF3K, EIF3L and EIF3M. The eIF-3 complex appears to include 3 stable modules: module A is composed of EIF3A, EIF3B, EIF3G and EIF3I; module B is composed of EIF3F, EIF3H, and EIF3M; and module C is composed of EIF3C, EIF3D, EIF3E, EIF3K and EIF3L. EIF3C of module C binds EIF3B of module A and EIF3H of module B, thereby linking the three modules. EIF3J is a labile subunit that binds to the eIF-3 complex via EIF3B. The eIF-3 complex interacts with RPS6KB1 under conditions of nutrient depletion. Mitogenic stimulation leads to binding and activation of a complex composed of MTOR and RPTOR, leading to phosphorylation and release of RPS6KB1 and binding of EIF4B to eIF-3. As to expression, broadly expressed.

The protein localises to the cytoplasm. Functionally, component of the eukaryotic translation initiation factor 3 (eIF-3) complex, which is required for several steps in the initiation of protein synthesis. The eIF-3 complex associates with the 40S ribosome and facilitates the recruitment of eIF-1, eIF-1A, eIF-2:GTP:methionyl-tRNAi and eIF-5 to form the 43S pre-initiation complex (43S PIC). The eIF-3 complex stimulates mRNA recruitment to the 43S PIC and scanning of the mRNA for AUG recognition. The eIF-3 complex is also required for disassembly and recycling of post-termination ribosomal complexes and subsequently prevents premature joining of the 40S and 60S ribosomal subunits prior to initiation. The eIF-3 complex specifically targets and initiates translation of a subset of mRNAs involved in cell proliferation, including cell cycling, differentiation and apoptosis, and uses different modes of RNA stem-loop binding to exert either translational activation or repression. Its function is as follows. (Microbial infection) May favor virus entry in case of infection with herpes simplex virus 1 (HSV1) or herpes simplex virus 2 (HSV2). This is Eukaryotic translation initiation factor 3 subunit M from Homo sapiens (Human).